Consider the following 473-residue polypeptide: Ribulose bisphosphate carboxylase large chain 1 (473 aa).

The substrate site is built by N116 and T166. K168 serves as the catalytic Proton acceptor. K170 serves as a coordination point for substrate. 3 residues coordinate Mg(2+): K194, D196, and E197. K194 is subject to N6-carboxylysine. H287 (proton acceptor) is an active-site residue. The substrate site is built by R288, H320, and S372.

It belongs to the RuBisCO large chain family. Type I subfamily. As to quaternary structure, heterohexadecamer of 8 large chains and 8 small chains. The cofactor is Mg(2+).

The catalysed reaction is 2 (2R)-3-phosphoglycerate + 2 H(+) = D-ribulose 1,5-bisphosphate + CO2 + H2O. It carries out the reaction D-ribulose 1,5-bisphosphate + O2 = 2-phosphoglycolate + (2R)-3-phosphoglycerate + 2 H(+). In terms of biological role, ruBisCO catalyzes two reactions: the carboxylation of D-ribulose 1,5-bisphosphate, the primary event in carbon dioxide fixation, as well as the oxidative fragmentation of the pentose substrate. Both reactions occur simultaneously and in competition at the same active site. This chain is Ribulose bisphosphate carboxylase large chain 1, found in Acidithiobacillus ferrooxidans (Thiobacillus ferrooxidans).